The sequence spans 252 residues: Glucosamine-6-phosphate deaminase (252 aa).

Residue Asp67 is the Proton acceptor; for enolization step of the active site. Asn137 acts as the For ring-opening step in catalysis. His139 acts as the Proton acceptor; for ring-opening step in catalysis. The For ring-opening step role is filled by Glu144.

This sequence belongs to the glucosamine/galactosamine-6-phosphate isomerase family. NagB subfamily.

It carries out the reaction alpha-D-glucosamine 6-phosphate + H2O = beta-D-fructose 6-phosphate + NH4(+). Its pathway is amino-sugar metabolism; N-acetylneuraminate degradation; D-fructose 6-phosphate from N-acetylneuraminate: step 5/5. Catalyzes the reversible isomerization-deamination of glucosamine 6-phosphate (GlcN6P) to form fructose 6-phosphate (Fru6P) and ammonium ion. In Staphylococcus aureus (strain Mu3 / ATCC 700698), this protein is Glucosamine-6-phosphate deaminase.